Reading from the N-terminus, the 406-residue chain is Acetylornithine aminotransferase (406 aa).

Pyridoxal 5'-phosphate is bound by residues 108–109 (GA) and phenylalanine 141. Residue arginine 144 participates in N(2)-acetyl-L-ornithine binding. 226-229 (DEVQ) contacts pyridoxal 5'-phosphate. Residue lysine 255 is modified to N6-(pyridoxal phosphate)lysine. Threonine 283 contributes to the N(2)-acetyl-L-ornithine binding site. Threonine 284 serves as a coordination point for pyridoxal 5'-phosphate.

It belongs to the class-III pyridoxal-phosphate-dependent aminotransferase family. ArgD subfamily. Homodimer. It depends on pyridoxal 5'-phosphate as a cofactor.

The protein localises to the cytoplasm. The enzyme catalyses N(2)-acetyl-L-ornithine + 2-oxoglutarate = N-acetyl-L-glutamate 5-semialdehyde + L-glutamate. Its pathway is amino-acid biosynthesis; L-arginine biosynthesis; N(2)-acetyl-L-ornithine from L-glutamate: step 4/4. This is Acetylornithine aminotransferase from Pseudomonas putida (strain ATCC 47054 / DSM 6125 / CFBP 8728 / NCIMB 11950 / KT2440).